Here is a 100-residue protein sequence, read N- to C-terminus: Urease subunit gamma (100 aa).

Belongs to the urease gamma subunit family. In terms of assembly, heterotrimer of UreA (gamma), UreB (beta) and UreC (alpha) subunits. Three heterotrimers associate to form the active enzyme.

It localises to the cytoplasm. It catalyses the reaction urea + 2 H2O + H(+) = hydrogencarbonate + 2 NH4(+). The protein operates within nitrogen metabolism; urea degradation; CO(2) and NH(3) from urea (urease route): step 1/1. The polypeptide is Urease subunit gamma (Cupriavidus necator (strain ATCC 17699 / DSM 428 / KCTC 22496 / NCIMB 10442 / H16 / Stanier 337) (Ralstonia eutropha)).